Reading from the N-terminus, the 824-residue chain is MAGTKKRANADDDFVLTLSDDENDTLNQLEEEGEGDDGALATGSKTKKRKRDDAAAAQQEKGKNKKVKKQEQQQQQAQQKKKKGKNAPVQEEEDEDEEEEEDQGEDDGALNSDFEFDVGGAANEVRDFDGWEVNGNEEGKGGDKKAVDIDDIISRRQAKKEAELIRKQKKKKQKQEEEFSELEDDDEEDGGMEVDFGDDELLAEDGFGMGVDGEEESEKSDAEDEEKEEGSDEEAEGSDEDEQMDEDDDDAASDDDSVATPVMHPDDIASDRDSDEESQVDAEEEEKRKAFFAPEEEKTSESAMADAKRSFQEFNLSRPILRGLAGVNFSNPTPIQRKTIPVALLGKDIVGSAVTGSGKTAAFVVPILERLLFRPRKVPTSRVAILMPTRELAVQCYNVATKLATYTDITFCQLVGGFSLREQENILKKRPDVIIATPGRFIDHMRNSASFTVDTLEILVLDEADRMLEDGFADELNEILTTIPKSRQTMLFSATMTDTVDKLIRVGLNRPVRLMVDAKKNTAVTLVQEFVRLRPGREDKRLGYLLYLCKEIYTGRVIVFFRQKKEAHRVRIIFGLLGLKAAELHGSMSQEQSVENFREGKAAFLLATDLASRGLDIKGVETVINYEAPQSHEIYLHRVGRTARAGRSGRACTIAAEPDRKVVKAAVKAGKSQGAKIASRVIEPAVADSWAAKAEELADEVEEVLSEEKLEKQLAQAEMQVTKGENLIKHEAEIKSRPKRTWFETERDKKAARKLGAAELNGPDAGMSKKEKQKLSNKDKKRLDDSRQRQEAGAGWKKGRATRESMKNGQLPKAKKDNKKKGKK.

Residues 1–305 are disordered; sequence MAGTKKRANA…EEKTSESAMA (305 aa). Acidic residues-rich tracts occupy residues 11–37 and 90–108; these read DDDF…EGDD and QEEE…EDDG. The segment covering 137-166 has biased composition (basic and acidic residues); that stretch reads EEGKGGDKKAVDIDDIISRRQAKKEAELIR. Composition is skewed to acidic residues over residues 178-203, 212-257, and 273-284; these read EFSE…ELLA, DGEE…DDDS, and DSDEESQVDAEE. Over residues 285–305 the composition is skewed to basic and acidic residues; it reads EEKRKAFFAPEEEKTSESAMA. The Q motif signature appears at 309-337; sequence RSFQEFNLSRPILRGLAGVNFSNPTPIQR. Residues 340–514 form the Helicase ATP-binding domain; that stretch reads IPVALLGKDI…RVGLNRPVRL (175 aa). 353–360 contacts ATP; sequence AVTGSGKT. Positions 462–465 match the DEAD box motif; it reads DEAD. Positions 541-685 constitute a Helicase C-terminal domain; it reads RLGYLLYLCK…KIASRVIEPA (145 aa). 2 stretches are compositionally biased toward basic and acidic residues: residues 739 to 749 and 767 to 790; these read KRTWFETERDK and MSKK…RQRQ. Residues 739 to 824 form a disordered region; it reads KRTWFETERD…KKDNKKKGKK (86 aa).

The protein belongs to the DEAD box helicase family. DDX27/DRS1 subfamily. Associates with pre-ribosomal particles.

Its subcellular location is the nucleus. It is found in the nucleolus. It catalyses the reaction ATP + H2O = ADP + phosphate + H(+). ATP-binding RNA helicase involved in ribosome assembly. In Aspergillus niger (strain ATCC MYA-4892 / CBS 513.88 / FGSC A1513), this protein is ATP-dependent RNA helicase drs1 (drs1).